We begin with the raw amino-acid sequence, 395 residues long: Putative nickel insertion protein (395 aa).

Belongs to the LarC family.

The protein is Putative nickel insertion protein of Archaeoglobus fulgidus (strain ATCC 49558 / DSM 4304 / JCM 9628 / NBRC 100126 / VC-16).